The primary structure comprises 385 residues: 1-deoxy-D-xylulose 5-phosphate reductoisomerase (385 aa).

NADPH contacts are provided by threonine 11, glycine 12, serine 13, isoleucine 14, asparagine 39, and asparagine 123. Residue lysine 124 coordinates 1-deoxy-D-xylulose 5-phosphate. Glutamate 125 provides a ligand contact to NADPH. Aspartate 149 provides a ligand contact to Mn(2+). The 1-deoxy-D-xylulose 5-phosphate site is built by serine 150, glutamate 151, serine 174, and histidine 197. Glutamate 151 is a Mn(2+) binding site. Glycine 203 contacts NADPH. The 1-deoxy-D-xylulose 5-phosphate site is built by serine 210, asparagine 215, lysine 216, and glutamate 219. Glutamate 219 is a binding site for Mn(2+).

The protein belongs to the DXR family. It depends on Mg(2+) as a cofactor. The cofactor is Mn(2+).

The catalysed reaction is 2-C-methyl-D-erythritol 4-phosphate + NADP(+) = 1-deoxy-D-xylulose 5-phosphate + NADPH + H(+). It participates in isoprenoid biosynthesis; isopentenyl diphosphate biosynthesis via DXP pathway; isopentenyl diphosphate from 1-deoxy-D-xylulose 5-phosphate: step 1/6. Catalyzes the NADPH-dependent rearrangement and reduction of 1-deoxy-D-xylulose-5-phosphate (DXP) to 2-C-methyl-D-erythritol 4-phosphate (MEP). The sequence is that of 1-deoxy-D-xylulose 5-phosphate reductoisomerase from Porphyromonas gingivalis (strain ATCC 33277 / DSM 20709 / CIP 103683 / JCM 12257 / NCTC 11834 / 2561).